Reading from the N-terminus, the 403-residue chain is Beta-galactoside alpha-2,6-sialyltransferase 1 (403 aa).

Residues 1–9 (MIHTNLKRK) lie on the Cytoplasmic side of the membrane. A helical; Signal-anchor for type II membrane protein membrane pass occupies residues 10–26 (FSCFVLVFLLFAIICVW). Over 27–403 (KKGSDYEALT…TLSGFRNNRC (377 aa)) the chain is Lumenal. 3 disulfide bridges follow: C139–C403, C181–C332, and C350–C361. N146 and N158 each carry an N-linked (GlcNAc...) asparagine glycan. Residues S186, N209, N230, 319 to 321 (SSG), C350, Y351, T362, Y366, H367, and K373 each bind substrate. At Y366 the chain carries Phosphotyrosine.

The protein belongs to the glycosyltransferase 29 family. In terms of assembly, monomer and homodimer. In terms of processing, N-glycosylated.

The protein localises to the golgi apparatus. The protein resides in the golgi stack membrane. It localises to the secreted. The catalysed reaction is a beta-D-galactoside + CMP-N-acetyl-beta-neuraminate = an N-acetyl-alpha-neuraminyl-(2-&gt;6)-beta-D-galactosyl derivative + CMP + H(+). It functions in the pathway protein modification; protein glycosylation. Its function is as follows. Transfers sialic acid from CMP-sialic acid to galactose-containing acceptor substrates. In Mus musculus (Mouse), this protein is Beta-galactoside alpha-2,6-sialyltransferase 1 (St6gal1).